We begin with the raw amino-acid sequence, 348 residues long: MTDLPFVTADLPGSGGALRRAPEDFRVDEVPAYLPSGAGPHLYLRVEKRGRTSRDAVRELARALGVPERDAGCAGLKDKDAVTTQWLSFPVARDPDPAALAAPGLRVLEASRHQNKLRTGHVRANRFTLAVRGGDLGRARECAGALAARGLPNFFGPQRFGAAGRNAAVGRALVTGERTPEAGRAARDRFLRRLSLSAYQSLLFNRWLAERMADGLFAAALAGDAMKKLDTGGLFTCEDPAADGPRVERFEISPAGPMFGHALRLAAGEAGAREARLLEAEGIALADFARGGGEAEGTRRAARLRVEVALEPLEDGYRAAFELPRGAYATVVMRELTKGEAELPEDAD.

The Nucleophile role is filled by Asp-78. Residues 150–304 (GLPNFFGPQR…AEGTRRAARL (155 aa)) form the TRUD domain.

It belongs to the pseudouridine synthase TruD family.

The catalysed reaction is uridine(13) in tRNA = pseudouridine(13) in tRNA. In terms of biological role, responsible for synthesis of pseudouridine from uracil-13 in transfer RNAs. The polypeptide is tRNA pseudouridine synthase D (Anaeromyxobacter dehalogenans (strain 2CP-1 / ATCC BAA-258)).